Reading from the N-terminus, the 439-residue chain is Ribosomal protein uS12 methylthiotransferase RimO (439 aa).

An MTTase N-terminal domain is found at 3-118 (KKFYITTLGC…AGKILREKFP (116 aa)). Residues cysteine 12, cysteine 48, cysteine 81, cysteine 157, cysteine 161, and cysteine 164 each contribute to the [4Fe-4S] cluster site. The 228-residue stretch at 143–370 (NYSKPYAYVK…RDVHLAILEE (228 aa)) folds into the Radical SAM core domain. Residues 373-438 (ESRIGQTYDA…EYDMNGTWIS (66 aa)) form the TRAM domain.

This sequence belongs to the methylthiotransferase family. RimO subfamily. The cofactor is [4Fe-4S] cluster.

The protein localises to the cytoplasm. It carries out the reaction L-aspartate(89)-[ribosomal protein uS12]-hydrogen + (sulfur carrier)-SH + AH2 + 2 S-adenosyl-L-methionine = 3-methylsulfanyl-L-aspartate(89)-[ribosomal protein uS12]-hydrogen + (sulfur carrier)-H + 5'-deoxyadenosine + L-methionine + A + S-adenosyl-L-homocysteine + 2 H(+). In terms of biological role, catalyzes the methylthiolation of an aspartic acid residue of ribosomal protein uS12. The sequence is that of Ribosomal protein uS12 methylthiotransferase RimO from Leptospira borgpetersenii serovar Hardjo-bovis (strain L550).